A 339-amino-acid polypeptide reads, in one-letter code: Heat-inducible transcription repressor HrcA (339 aa).

The protein belongs to the HrcA family.

In terms of biological role, negative regulator of class I heat shock genes (grpE-dnaK-dnaJ and groELS operons). Prevents heat-shock induction of these operons. The chain is Heat-inducible transcription repressor HrcA from Frankia casuarinae (strain DSM 45818 / CECT 9043 / HFP020203 / CcI3).